The primary structure comprises 66 residues: Large ribosomal subunit protein bL31 (66 aa).

Cysteine 16, cysteine 18, cysteine 36, and cysteine 39 together coordinate Zn(2+).

The protein belongs to the bacterial ribosomal protein bL31 family. Type A subfamily. In terms of assembly, part of the 50S ribosomal subunit during exponential growth. Zn(2+) is required as a cofactor.

Binds the 23S rRNA. In terms of biological role, while neither of the L31 paralogs is essential, this protein seems to function as the main L31 protein. Has a lower affinity for 70S ribosomes than the non-zinc-containing paralog L31B (ytiA); is displaced by it to varying extents, even under zinc-replete conditions. In Bacillus subtilis (strain 168), this protein is Large ribosomal subunit protein bL31 (rpmE).